Here is a 377-residue protein sequence, read N- to C-terminus: Chaperone MoxR1 (377 aa).

Residues 1–33 (MTSAGGFPAGAGGYQTPGGHSASPAHEAPPGGA) are disordered. Positions 7-16 (FPAGAGGYQT) are enriched in gly residues. The span at 19-33 (GHSASPAHEAPPGGA) shows a compositional bias: low complexity. 78-85 (GVPGVAKT) provides a ligand contact to ATP.

Belongs to the MoxR family. In terms of assembly, interacts with RipA. Interacts with host Toll-like receptor 4 (TLR4).

Displays ATP-enhanced chaperone activity. Required for the proper folding of the peptidoglycan endopeptidase RipA and its secretion through the TAT secretion system. In vitro, prevents thermal aggregation of MalZ protein and protects the functional activity of the restriction enzyme NdeI from thermal inactivation. Functionally, could be a moonlighting protein that uses a multipronged approach to dampen host-directed immunity for efficient replication, survival and pathogenesis. Can enhance virulence by inhibiting autophagy and apoptosis, and disrupting cellular bioenergetics. Binds and activates host TLR4 on the surface of macrophage cells, leading to the activation of the host NFKB and MAPK signaling cascades and enhanced secretion of proinflammatory cytokines. Inhibits autophagic flux via activation of PI3K-AKT-MTOR-ULK1 signaling cascade and represses apoptosis via inhibiting protooncogene c-FOS and MAPK JNK1/2. Also induces robust disruption of cellular bioenergetics by metabolic reprogramming to rewire the citric acid cycle intermediates for its benefit. In Mycobacterium tuberculosis (strain ATCC 25618 / H37Rv), this protein is Chaperone MoxR1.